The sequence spans 1076 residues: DNA-directed RNA polymerase subunit beta (1076 aa).

This sequence belongs to the RNA polymerase beta chain family. In terms of assembly, in plastids the minimal PEP RNA polymerase catalytic core is composed of four subunits: alpha, beta, beta', and beta''. When a (nuclear-encoded) sigma factor is associated with the core the holoenzyme is formed, which can initiate transcription.

The protein localises to the plastid. It is found in the chloroplast. The enzyme catalyses RNA(n) + a ribonucleoside 5'-triphosphate = RNA(n+1) + diphosphate. Functionally, DNA-dependent RNA polymerase catalyzes the transcription of DNA into RNA using the four ribonucleoside triphosphates as substrates. The polypeptide is DNA-directed RNA polymerase subunit beta (Agrostis stolonifera (Creeping bentgrass)).